Here is a 372-residue protein sequence, read N- to C-terminus: tRNA-specific 2-thiouridylase MnmA (372 aa).

ATP contacts are provided by residues 7-14 (GLSGGVDS) and methionine 33. The interaction with target base in tRNA stretch occupies residues 104 to 106 (NPD). Cysteine 109 acts as the Nucleophile in catalysis. Cysteine 109 and cysteine 202 are disulfide-bonded. Glycine 134 provides a ligand contact to ATP. Residues 152–154 (KDQ) are interaction with tRNA. The active-site Cysteine persulfide intermediate is the cysteine 202. Residues 310 to 311 (RY) are interaction with tRNA.

It belongs to the MnmA/TRMU family.

Its subcellular location is the cytoplasm. The enzyme catalyses S-sulfanyl-L-cysteinyl-[protein] + uridine(34) in tRNA + AH2 + ATP = 2-thiouridine(34) in tRNA + L-cysteinyl-[protein] + A + AMP + diphosphate + H(+). Functionally, catalyzes the 2-thiolation of uridine at the wobble position (U34) of tRNA, leading to the formation of s(2)U34. This chain is tRNA-specific 2-thiouridylase MnmA, found in Mesomycoplasma hyopneumoniae (strain 7448) (Mycoplasma hyopneumoniae).